The following is a 256-amino-acid chain: Isoprenyl transferase (256 aa).

Residue Asp33 is part of the active site. Position 33 (Asp33) interacts with Mg(2+). Residues 34–37, Trp38, Arg46, His50, and 78–80 each bind substrate; these read GNGR and STE. The active-site Proton acceptor is the Asn81. Substrate-binding positions include Trp82, Arg84, Arg201, and 207 to 209; that span reads RIS. Glu220 is a Mg(2+) binding site.

This sequence belongs to the UPP synthase family. In terms of assembly, homodimer. It depends on Mg(2+) as a cofactor.

Its function is as follows. Catalyzes the condensation of isopentenyl diphosphate (IPP) with allylic pyrophosphates generating different type of terpenoids. This chain is Isoprenyl transferase, found in Staphylococcus aureus (strain Mu50 / ATCC 700699).